We begin with the raw amino-acid sequence, 311 residues long: tRNA-cytidine(32) 2-sulfurtransferase (311 aa).

The short motif at 47–52 is the PP-loop motif element; sequence SGGKDS. The [4Fe-4S] cluster site is built by C122, C125, and C213.

Belongs to the TtcA family. As to quaternary structure, homodimer. It depends on Mg(2+) as a cofactor. [4Fe-4S] cluster serves as cofactor.

Its subcellular location is the cytoplasm. The enzyme catalyses cytidine(32) in tRNA + S-sulfanyl-L-cysteinyl-[cysteine desulfurase] + AH2 + ATP = 2-thiocytidine(32) in tRNA + L-cysteinyl-[cysteine desulfurase] + A + AMP + diphosphate + H(+). It functions in the pathway tRNA modification. In terms of biological role, catalyzes the ATP-dependent 2-thiolation of cytidine in position 32 of tRNA, to form 2-thiocytidine (s(2)C32). The sulfur atoms are provided by the cysteine/cysteine desulfurase (IscS) system. The protein is tRNA-cytidine(32) 2-sulfurtransferase of Salmonella typhimurium (strain LT2 / SGSC1412 / ATCC 700720).